We begin with the raw amino-acid sequence, 114 residues long: Beta-microseminoprotein J1 (114 aa).

A signal peptide spans 1 to 20; it reads MNVLLGGLVIFATFVTLCNA. Intrachain disulfides connect C22/C70, C38/C62, C57/C93, C60/C69, and C84/C107.

The protein belongs to the beta-microseminoprotein family.

Its subcellular location is the secreted. The protein is Beta-microseminoprotein J1 (MSPJ) of Saguinus oedipus (Cotton-top tamarin).